We begin with the raw amino-acid sequence, 230 residues long: Iron-dependent repressor IdeR (230 aa).

Positions 4–65 (LVDTTEMYLR…VAGDRHLELT (62 aa)) constitute an HTH dtxR-type domain.

It belongs to the DtxR/MntR family. As to quaternary structure, homodimer.

Its subcellular location is the cytoplasm. In terms of biological role, metal-dependent DNA-binding protein that controls transcription of many genes involved in iron metabolism. In Mycobacterium bovis (strain ATCC BAA-935 / AF2122/97), this protein is Iron-dependent repressor IdeR (ideR).